We begin with the raw amino-acid sequence, 573 residues long: MMKFSVIVPTYNSEKYITELLNSLAKQDFPKTEFEVVVVDDCSTDQTLQIVEKYRNKLNLKVSQLETNSGGPGKPRNVALKQAEGEFVLFVDSDDYINKETLKDAAAFIDEHHSDVLLIKMKGVNGRGVPQSMFKETAPEVTLLNSRIIYTLSPTKIYRTALLKDNDIYFPEELKSAEDQLFTMKAYLNANRISVLSDKAYYYATKREGEHMSSAYVSPEDFYEVMRLIAVEILNADLEEAHKDQILAEFLNRHFSFSRTNGFSLKVKLEEQPQWINALGDFIQAVPERVDALVMSKLRPLLHYARAKDIDNYRTVEESYRQGQYYRFDIVDGKLNIQFNEGEPYFEGIDIAKPKVKMTAFKFDNHKIVTELTLNEFMIGEGHYDVRLKLHSRNKKHTMYVPLSVNANKQYRFNIMLEDIKAYLPKEKIWDVFLEVQIGTEVFEVRVGNQRNKYAYTAETSALIHLNNDFYRLTPYFTKDFNNISLYFTAITLTDSISMKLKGKNKIILTGLDRGYVFEEGMASVVLKDDMIMGMLSQTSENEVEILLSKDIKKRDFKNIVKLNTAHMTYSLK.

Residues Pro-9, Asp-41, Asn-68, Arg-76, 92-94 (DSD), Arg-127, and Glu-178 each bind UDP-N-acetyl-alpha-D-glucosamine. Asp-94 contacts Mn(2+). Asp-179 functions as the Proton acceptor in the catalytic mechanism. UDP-N-acetyl-alpha-D-glucosamine is bound by residues Arg-207 and 211 to 213 (HMS).

The protein belongs to the glycosyltransferase 2 family. Homotrimer. Mn(2+) serves as cofactor.

It catalyses the reaction 4-O-[(D-ribitylphospho)(n)-di{(2R)-glycerylphospho}]-N-acetyl-beta-D-mannosaminyl-(1-&gt;4)-N-acetyl-alpha-D-glucosaminyl di-trans,octa-cis-undecaprenyl diphosphate + n UDP-N-acetyl-alpha-D-glucosamine = 4-O-([2-N-acetyl-beta-D-glucosaminyl-1-D-ribitylphospho](n)-di{[2R]-1-glycerylphospho})-N-acetyl-beta-D-mannosaminyl-(1-&gt;4)-N-acetyl-alpha-D-glucosaminyl di-trans,octa-cis-undecaprenyl diphosphate + n UDP + n H(+). Its pathway is cell wall biogenesis; poly(ribitol phosphate) teichoic acid biosynthesis. In terms of biological role, attaches beta-O-GlcNAc (beta-O-N-acetyl-D-glucosamine) residues to the C4 position of poly(RboP)-wall teichoic acids (WTAs). Mediates beta-lactam resistance in methicillin resistant Staphylococcus aureus (MRSA) strains. In Staphylococcus aureus (strain Mu50 / ATCC 700699), this protein is Poly(ribitol-phosphate) beta-N-acetylglucosaminyltransferase TarS.